Consider the following 283-residue polypeptide: 2-dehydro-3-deoxyphosphooctonate aldolase (283 aa).

Belongs to the KdsA family.

It localises to the cytoplasm. It catalyses the reaction D-arabinose 5-phosphate + phosphoenolpyruvate + H2O = 3-deoxy-alpha-D-manno-2-octulosonate-8-phosphate + phosphate. It functions in the pathway carbohydrate biosynthesis; 3-deoxy-D-manno-octulosonate biosynthesis; 3-deoxy-D-manno-octulosonate from D-ribulose 5-phosphate: step 2/3. Its pathway is bacterial outer membrane biogenesis; lipopolysaccharide biosynthesis. The sequence is that of 2-dehydro-3-deoxyphosphooctonate aldolase from Laribacter hongkongensis (strain HLHK9).